We begin with the raw amino-acid sequence, 506 residues long: Glutamate--tRNA ligase (506 aa).

Positions 12–22 (PSPTGDPHVGT) match the 'HIGH' region motif. The 'KMSKS' region signature appears at 253–257 (KLSKR). Residue lysine 256 coordinates ATP.

It belongs to the class-I aminoacyl-tRNA synthetase family. Glutamate--tRNA ligase type 1 subfamily. As to quaternary structure, monomer.

It localises to the cytoplasm. The catalysed reaction is tRNA(Glu) + L-glutamate + ATP = L-glutamyl-tRNA(Glu) + AMP + diphosphate. Functionally, catalyzes the attachment of glutamate to tRNA(Glu) in a two-step reaction: glutamate is first activated by ATP to form Glu-AMP and then transferred to the acceptor end of tRNA(Glu). This Chlamydia trachomatis serovar A (strain ATCC VR-571B / DSM 19440 / HAR-13) protein is Glutamate--tRNA ligase.